The chain runs to 205 residues: Large ribosomal subunit protein uL18 (205 aa).

This sequence belongs to the universal ribosomal protein uL18 family. As to quaternary structure, part of the 50S ribosomal subunit. Contacts the 5S and 23S rRNAs.

Functionally, this is one of the proteins that bind and probably mediate the attachment of the 5S RNA into the large ribosomal subunit, where it forms part of the central protuberance. This is Large ribosomal subunit protein uL18 from Pyrobaculum neutrophilum (strain DSM 2338 / JCM 9278 / NBRC 100436 / V24Sta) (Thermoproteus neutrophilus).